A 176-amino-acid chain; its full sequence is Cytochrome c oxidase subunit 5b-1, mitochondrial (176 aa).

A mitochondrion-targeting transit peptide spans 1-55 (MWRRIVSSQLKTLAADVVAASPRRSIAATTRPVGFYLAANRSAISASSFVIPRRF). Residues Cys122, Cys146, and Cys149 each coordinate Zn(2+). Residues 157–176 (VVGPGGPPDGHGDEDDEHHH) are disordered.

It belongs to the cytochrome c oxidase subunit 5B (TC 3.D.4.11) family.

It is found in the mitochondrion inner membrane. Its function is as follows. This protein is one of the nuclear-coded polypeptide chains of cytochrome c oxidase, the terminal oxidase in mitochondrial electron transport. In Arabidopsis thaliana (Mouse-ear cress), this protein is Cytochrome c oxidase subunit 5b-1, mitochondrial (COX5B-1).